Consider the following 453-residue polypeptide: V-type proton ATPase subunit B (453 aa).

Arg341 is an ATP binding site.

This sequence belongs to the ATPase alpha/beta chains family. V-ATPase is a heteromultimeric enzyme made up of two complexes: the ATP-hydrolytic V1 complex and the proton translocation V0 complex. The V1 complex consists of three catalytic AB heterodimers that form a heterohexamer, three peripheral stalks each consisting of EG heterodimers, one central rotor including subunits D and F, and the regulatory subunits C and H. The proton translocation complex V0 consists of the proton transport subunit a, a ring of proteolipid subunits c9c'', rotary subunit d, subunits e and f, and two accessory subunits.

Non-catalytic subunit of the V1 complex of vacuolar(H+)-ATPase (V-ATPase), a multisubunit enzyme composed of a peripheral complex (V1) that hydrolyzes ATP and a membrane integral complex (V0) that translocates protons. V-ATPase is responsible for acidifying and maintaining the pH of intracellular compartments and in some cell types, is targeted to the plasma membrane, where it is responsible for acidifying the extracellular environment. Essential for the proper assembly and activity of V-ATPase. This is V-type proton ATPase subunit B (ATP6V1B) from Gallus gallus (Chicken).